Here is a 422-residue protein sequence, read N- to C-terminus: Testin (422 aa).

A PET domain is found at 92–199; it reads MILTSPVAAK…GDVKLPKEVE (108 aa). The segment at 135 to 165 is disordered; it reads QPVAGSEGAQYRKKQLAKQLPAHDQDPSKCH. Residues 155-165 are compositionally biased toward basic and acidic residues; sequence PAHDQDPSKCH. LIM zinc-binding domains lie at 234-299, 300-359, and 360-422; these read YYCF…SEKP, RCAG…NHAV, and SCQG…KMSS.

It belongs to the prickle / espinas / testin family. Expressed in the animal hemisphere at the 4-cell stage. By stage 18, expressed in cells adjacent to the anterior neural plate. In late neurula, expressed in the cranial neural crest. At tail bud stages, expressed strongly in the head, ventral to the developing eye, branchial arches and lateral line placodes. Also localized in the otic vesicle, dorsal fin and notochord with weaker expression at intersomitic junctions of tail bud embryos.

The protein resides in the cytoplasm. The protein localises to the cell cortex. Its subcellular location is the cell junction. It localises to the focal adhesion. Functionally, scaffold protein that may play a role in cell adhesion, cell spreading and in the reorganization of the actin cytoskeleton. May inhibit cell growth. Regulates cranial neural crest migration. Acts together with prickle1 to control axial elongation. This chain is Testin, found in Xenopus laevis (African clawed frog).